The chain runs to 257 residues: Ribonuclease PH (257 aa).

Residues Arg86 and 124-126 (GTR) contribute to the phosphate site.

Belongs to the RNase PH family. As to quaternary structure, homohexameric ring arranged as a trimer of dimers.

It catalyses the reaction tRNA(n+1) + phosphate = tRNA(n) + a ribonucleoside 5'-diphosphate. In terms of biological role, phosphorolytic 3'-5' exoribonuclease that plays an important role in tRNA 3'-end maturation. Removes nucleotide residues following the 3'-CCA terminus of tRNAs; can also add nucleotides to the ends of RNA molecules by using nucleoside diphosphates as substrates, but this may not be physiologically important. Probably plays a role in initiation of 16S rRNA degradation (leading to ribosome degradation) during starvation. In Halalkalibacterium halodurans (strain ATCC BAA-125 / DSM 18197 / FERM 7344 / JCM 9153 / C-125) (Bacillus halodurans), this protein is Ribonuclease PH.